A 108-amino-acid chain; its full sequence is T cell receptor alpha variable 1-1 (108 aa).

The signal sequence occupies residues 1 to 18; it reads MWGAFLLYVSMKMGGTAG. Residues 19–108 form the Ig-like domain; that stretch reads QSLEQPSEVT…DSASYFCAVR (90 aa). The N-linked (GlcNAc...) asparagine glycan is linked to Asn38. The cysteines at positions 39 and 105 are disulfide-linked.

Alpha-beta TR is a heterodimer composed of an alpha and beta chain; disulfide-linked. The alpha-beta TR is associated with the transmembrane signaling CD3 coreceptor proteins to form the TR-CD3 (TcR or TCR). The assembly of alpha-beta TR heterodimers with CD3 occurs in the endoplasmic reticulum where a single alpha-beta TR heterodimer associates with one CD3D-CD3E heterodimer, one CD3G-CD3E heterodimer and one CD247 homodimer forming a stable octameric structure. CD3D-CD3E and CD3G-CD3E heterodimers preferentially associate with TR alpha and TR beta chains, respectively. The association of the CD247 homodimer is the last step of TcR assembly in the endoplasmic reticulum and is required for transport to the cell surface.

The protein resides in the cell membrane. V region of the variable domain of T cell receptor (TR) alpha chain that participates in the antigen recognition. Alpha-beta T cell receptors are antigen specific receptors which are essential to the immune response and are present on the cell surface of T lymphocytes. Recognize peptide-major histocompatibility (MH) (pMH) complexes that are displayed by antigen presenting cells (APC), a prerequisite for efficient T cell adaptive immunity against pathogens. Binding of alpha-beta TR to pMH complex initiates TR-CD3 clustering on the cell surface and intracellular activation of LCK that phosphorylates the ITAM motifs of CD3G, CD3D, CD3E and CD247 enabling the recruitment of ZAP70. In turn ZAP70 phosphorylates LAT, which recruits numerous signaling molecules to form the LAT signalosome. The LAT signalosome propagates signal branching to three major signaling pathways, the calcium, the mitogen-activated protein kinase (MAPK) kinase and the nuclear factor NF-kappa-B (NF-kB) pathways, leading to the mobilization of transcription factors that are critical for gene expression and essential for T cell growth and differentiation. The T cell repertoire is generated in the thymus, by V-(D)-J rearrangement. This repertoire is then shaped by intrathymic selection events to generate a peripheral T cell pool of self-MH restricted, non-autoaggressive T cells. Post-thymic interaction of alpha-beta TR with the pMH complexes shapes TR structural and functional avidity. The polypeptide is T cell receptor alpha variable 1-1 (Homo sapiens (Human)).